Reading from the N-terminus, the 217-residue chain is High frequency lysogenization protein HflD homolog (217 aa).

This sequence belongs to the HflD family.

The protein resides in the cytoplasm. It is found in the cell membrane. The chain is High frequency lysogenization protein HflD homolog from Buchnera aphidicola subsp. Baizongia pistaciae (strain Bp).